The following is a 223-amino-acid chain: Ribose-5-phosphate isomerase A (223 aa).

Substrate is bound by residues 28-31 (TGTT), 81-84 (DSAD), and 94-97 (KGGG). E103 acts as the Proton acceptor in catalysis. K121 contributes to the substrate binding site.

The protein belongs to the ribose 5-phosphate isomerase family. Homodimer.

The catalysed reaction is aldehydo-D-ribose 5-phosphate = D-ribulose 5-phosphate. It functions in the pathway carbohydrate degradation; pentose phosphate pathway; D-ribose 5-phosphate from D-ribulose 5-phosphate (non-oxidative stage): step 1/1. Its function is as follows. Catalyzes the reversible conversion of ribose-5-phosphate to ribulose 5-phosphate. The chain is Ribose-5-phosphate isomerase A from Buchnera aphidicola subsp. Acyrthosiphon pisum (strain 5A).